We begin with the raw amino-acid sequence, 186 residues long: Tumor necrosis factor alpha-induced protein 8-like protein 2 (186 aa).

It belongs to the TNFAIP8 family. TNFAIP8L2 subfamily.

Its function is as follows. Acts as a negative regulator of innate and adaptive immunity by maintaining immune homeostasis. Negative regulator of Toll-like receptor and T-cell receptor function. Prevents hyperresponsiveness of the immune system and maintains immune homeostasis. Inhibits jun/ap1 and NF-kappa-B activation. Promotes Fas-induced apoptosis. This Xenopus tropicalis (Western clawed frog) protein is Tumor necrosis factor alpha-induced protein 8-like protein 2 (tnfaip8l2).